The chain runs to 514 residues: 1-pyrroline-5-carboxylate dehydrogenase (514 aa).

Active-site residues include E286 and C320.

It belongs to the aldehyde dehydrogenase family. RocA subfamily.

The catalysed reaction is L-glutamate 5-semialdehyde + NAD(+) + H2O = L-glutamate + NADH + 2 H(+). It functions in the pathway amino-acid degradation; L-proline degradation into L-glutamate; L-glutamate from L-proline: step 2/2. The sequence is that of 1-pyrroline-5-carboxylate dehydrogenase from Staphylococcus aureus (strain MRSA252).